We begin with the raw amino-acid sequence, 278 residues long: Diaminopimelate epimerase (278 aa).

N13, Q46, and N67 together coordinate substrate. The active-site Proton donor is the C76. Substrate contacts are provided by residues 77 to 78 (GN), N160, N193, and 211 to 212 (ER). C220 (proton acceptor) is an active-site residue. 221 to 222 (GT) serves as a coordination point for substrate.

This sequence belongs to the diaminopimelate epimerase family. In terms of assembly, homodimer.

It localises to the cytoplasm. It catalyses the reaction (2S,6S)-2,6-diaminopimelate = meso-2,6-diaminopimelate. It functions in the pathway amino-acid biosynthesis; L-lysine biosynthesis via DAP pathway; DL-2,6-diaminopimelate from LL-2,6-diaminopimelate: step 1/1. Catalyzes the stereoinversion of LL-2,6-diaminopimelate (L,L-DAP) to meso-diaminopimelate (meso-DAP), a precursor of L-lysine and an essential component of the bacterial peptidoglycan. The chain is Diaminopimelate epimerase from Thioalkalivibrio sulfidiphilus (strain HL-EbGR7).